An 89-amino-acid polypeptide reads, in one-letter code: Large ribosomal subunit protein bL27 (89 aa).

A disordered region spans residues 1-26; it reads MAHKKAGGSSKNGRDSNAQRRGVKRF.

This sequence belongs to the bacterial ribosomal protein bL27 family.

In Maridesulfovibrio salexigens (strain ATCC 14822 / DSM 2638 / NCIMB 8403 / VKM B-1763) (Desulfovibrio salexigens), this protein is Large ribosomal subunit protein bL27.